Reading from the N-terminus, the 252-residue chain is Short chain dehydrogenase andC (252 aa).

The first 25 residues, 1 to 25, serve as a signal peptide directing secretion; that stretch reads MGFLQDKVVIITGAAAGIGLATATA. NADP(+) is bound by residues Ile-11, Asp-57, and Arg-119. Ser-137 acts as the Proton donor in catalysis. Tyr-151 and Lys-155 together coordinate NADP(+). Tyr-151 functions as the Proton acceptor in the catalytic mechanism. The Lowers pKa of active site Tyr role is filled by Lys-155.

It belongs to the short-chain dehydrogenases/reductases (SDR) family.

It functions in the pathway secondary metabolite biosynthesis; terpenoid biosynthesis. Short chain dehydrogenase; part of the gene cluster that mediates the biosynthesis of anditomin, a fungal meroterpenoid. The first step of the pathway is the synthesis of 3,5-dimethylorsellinic acid (DMOA) by the polyketide synthase andM. DMOA is then converted to the phthalide compound 5,7-dihydroxy-4,6-dimethylphthalide (DHDMP) by the cytochrome P450 monooxygenase andK, which is further prenylated by the prenyltransferase andD to yield farnesyl-DHDMP. Further epoxidation by the FAD-dependent monooxygenase andE leads to epoxyfarnesyl-DHDMP. The next step involves the terpene cyclase andB that converts epoxyfarnesyl-DHDMP into preandiloid A through opening of the epoxide ring followed by the cyclization of the farnesyl moiety. Preandiloid A is in turn oxidized at the C-3 hydroxyl group to yield preandiloid B by the dehydrogenase andC. The dioxygenase andA is solely responsible for the dehydrogenation of preandiloid B leading to the enone preandiloid C, as well as for the intriguing structural rearrangement to generate the bicyclo[2.2.2]octane core, transforming preandiloid C into andiconin. FAD-binding monooxygenase andJ then produces andilesin D which is reduced by dehydrogenase andI to yield andilesin A. Action of acetyltransferase andG followed by a spontaneous acetate elimination leads then to andilesin B, which is in turn substrate of the short chain dehydrogenase andH to yield andilesin C. Finally, the dioxygenase andF catalyzes the transformation of andilesin C to anditomin. The polypeptide is Short chain dehydrogenase andC (Emericella variicolor (Aspergillus stellatus)).